The following is a 1435-amino-acid chain: Nitric oxide synthase 1 (1435 aa).

An interaction with NOSIP region spans residues 1–206 (MEEHVFGVQQ…LQGSGDKNEL (206 aa)). Positions 17–99 (SVRLFKRKVG…ETHVVLILRG (83 aa)) constitute a PDZ domain. Disordered regions lie at residues 110-201 (TFTG…QGSG) and 277-304 (NNPY…SKCP). An interaction with DYNLL1/PIN region spans residues 164-246 (QGHGQEAGSP…TGVQVDRDFD (83 aa)). Over residues 290–300 (GKQSPTKNGSP) the composition is skewed to polar residues. Ser-340 provides a ligand contact to (6R)-L-erythro-5,6,7,8-tetrahydrobiopterin. Cys-421 serves as a coordination point for heme b. Residues Gln-484, Trp-593, Tyr-594, and Glu-598 each contribute to the L-arginine site. Positions 683, 684, and 697 each coordinate (6R)-L-erythro-5,6,7,8-tetrahydrobiopterin. Tyr-712 lines the heme b pocket. Residues 731–751 (KRRAIGFKKLAEAVKFSAKLM) are calmodulin-binding. The 181-residue stretch at 761-941 (ATILYATETG…AFRTWAKKVF (181 aa)) folds into the Flavodoxin-like domain. FMN-binding residues include Thr-767, Glu-768, Thr-769, Lys-771, Ser-772, Ser-813, Thr-814, and Gly-818. Ser-853, Ser-863, and Ser-864 each carry phosphoserine. Residues Ser-892, His-897, Cys-899, Glu-925, and Gln-929 each contribute to the FMN site. An FAD-binding FR-type domain is found at 996-1243 (KRVSAARLLS…VRGAPSFRLP (248 aa)). NADP(+) is bound at residue Arg-1016. Residues His-1038, Arg-1179, Tyr-1180, Tyr-1181, Ser-1182, Thr-1197, and Ala-1199 each contribute to the FAD site. Ser-1202 contacts NADP(+). FAD-binding residues include Tyr-1203, Val-1216, Cys-1217, and Ser-1218. Thr-1257, Arg-1290, Ser-1319, Arg-1320, Lys-1326, Tyr-1328, Gln-1330, Asp-1363, Thr-1404, and Arg-1406 together coordinate NADP(+).

This sequence belongs to the NOS family. As to quaternary structure, homodimer. Interacts with DLG4; the interaction possibly being prevented by the association between NOS1 and CAPON. Forms a ternary complex with CAPON and RASD1. Forms a ternary complex with CAPON and SYN1. Interacts with ZDHHC23. Interacts with NOSIP; which may impair its synaptic location. Interacts with HTR4. Interacts with SLC6A4. Interacts with VAC14. Interacts (via N-terminal domain) with DLG4 (via N-terminal tandem pair of PDZ domains). Interacts with SLC6A4. Forms a complex with ASL, ASS1 and SLC7A1; the complex regulates cell-autonomous L-arginine synthesis and citrulline recycling while channeling extracellular L-arginine to nitric oxide synthesis pathway. Interacts with DMD; localizes NOS1 to sarcolemma in muscle cells. Interacts with DYNLL1; inhibits the nitric oxide synthase activity. It depends on heme b as a cofactor. FAD is required as a cofactor. FMN serves as cofactor. Requires (6R)-L-erythro-5,6,7,8-tetrahydrobiopterin as cofactor. Ubiquitinated; mediated by STUB1/CHIP in the presence of Hsp70 and Hsp40 (in vitro).

Its subcellular location is the cell membrane. The protein localises to the sarcolemma. It localises to the cell projection. The protein resides in the dendritic spine. It catalyses the reaction 2 L-arginine + 3 NADPH + 4 O2 + H(+) = 2 L-citrulline + 2 nitric oxide + 3 NADP(+) + 4 H2O. Its activity is regulated as follows. Stimulated by calcium/calmodulin. Inhibited by DYNLL1 that prevents the dimerization of the protein. Inhibited by NOSIP. Its function is as follows. Produces nitric oxide (NO) which is a messenger molecule with diverse functions throughout the body. In the brain and peripheral nervous system, NO displays many properties of a neurotransmitter. Probably has nitrosylase activity and mediates cysteine S-nitrosylation of cytoplasmic target proteins such SRR. The chain is Nitric oxide synthase 1 (NOS1) from Oryctolagus cuniculus (Rabbit).